Reading from the N-terminus, the 135-residue chain is Ribonuclease P protein component 2 (135 aa).

Belongs to the eukaryotic/archaeal RNase P protein component 2 family. As to quaternary structure, consists of a catalytic RNA component and at least 4-5 protein subunits.

The protein resides in the cytoplasm. The enzyme catalyses Endonucleolytic cleavage of RNA, removing 5'-extranucleotides from tRNA precursor.. Functionally, part of ribonuclease P, a protein complex that generates mature tRNA molecules by cleaving their 5'-ends. This is Ribonuclease P protein component 2 from Methanosarcina barkeri (strain Fusaro / DSM 804).